Here is a 916-residue protein sequence, read N- to C-terminus: DNA ligase 1 (916 aa).

The span at 1–10 (MQRSIMSFFQ) shows a compositional bias: polar residues. The segment at 1–197 (MQRSIMSFFQ…SPESVTLTKT (197 aa)) is disordered. A compositionally biased stretch (basic and acidic residues) spans 13-43 (KEGKAKKPEKETPSSIREKEPPPKVALKERN). Phosphoserine is present on residues serine 49, serine 51, and serine 65. Threonine 77 carries the phosphothreonine modification. Over residues 99-111 (PENSPVFNCSSPM) the composition is skewed to polar residues. The span at 119-129 (PKRRTARKQLP) shows a compositional bias: basic residues. Lysine 144 is subject to N6-acetyllysine. A compositionally biased stretch (basic and acidic residues) spans 153 to 177 (KEEETPKESLAEAEDIKQKEEKEGD). Polar residues predominate over residues 185-197 (PTKSPESVTLTKT). Phosphothreonine is present on threonine 193. Lysine 225 bears the N6-acetyllysine mark. Residues serine 228 and serine 229 each carry the phosphoserine modification. Threonine 232 is modified (phosphothreonine). The disordered stretch occupies residues 236–266 (PAVKTEVKQEESGTLRKEETKGTLDPANYNP). Residues 238–257 (VKTEVKQEESGTLRKEETKG) are compositionally biased toward basic and acidic residues. The interaction with target DNA stretch occupies residues 447-456 (RLRLGLAEQS). Glutamate 564 lines the ATP pocket. Lysine 566 (N6-AMP-lysine intermediate) is an active-site residue. ATP-binding residues include arginine 571 and glutamate 619. A Mg(2+)-binding site is contributed by glutamate 619. The segment at 640-642 (KRK) is interaction with target DNA. Glutamate 718 contributes to the Mg(2+) binding site. 2 residues coordinate ATP: lysine 723 and lysine 742. Threonine 796 carries the post-translational modification Phosphothreonine. Serine 799, serine 906, serine 907, and serine 911 each carry phosphoserine. The tract at residues 879 to 916 (DKQPEQATTSNQVASLYRKQSQIQNQQSSDLDSDVEDY) is disordered. Positions 883 to 908 (EQATTSNQVASLYRKQSQIQNQQSSD) are enriched in polar residues.

This sequence belongs to the ATP-dependent DNA ligase family. Interacts with PCNA. Interacts with POLB. Mg(2+) serves as cofactor.

The protein localises to the nucleus. It catalyses the reaction ATP + (deoxyribonucleotide)n-3'-hydroxyl + 5'-phospho-(deoxyribonucleotide)m = (deoxyribonucleotide)n+m + AMP + diphosphate.. Its function is as follows. DNA ligase that seals nicks in double-stranded during DNA repair. Also involved in DNA replication and DNA recombination. The chain is DNA ligase 1 (Lig1) from Mus musculus (Mouse).